A 302-amino-acid chain; its full sequence is Sulfate adenylyltransferase subunit 2 (302 aa).

This sequence belongs to the PAPS reductase family. CysD subfamily. As to quaternary structure, heterodimer composed of CysD, the smaller subunit, and CysN.

It carries out the reaction sulfate + ATP + H(+) = adenosine 5'-phosphosulfate + diphosphate. The protein operates within sulfur metabolism; hydrogen sulfide biosynthesis; sulfite from sulfate: step 1/3. Functionally, with CysN forms the ATP sulfurylase (ATPS) that catalyzes the adenylation of sulfate producing adenosine 5'-phosphosulfate (APS) and diphosphate, the first enzymatic step in sulfur assimilation pathway. APS synthesis involves the formation of a high-energy phosphoric-sulfuric acid anhydride bond driven by GTP hydrolysis by CysN coupled to ATP hydrolysis by CysD. The protein is Sulfate adenylyltransferase subunit 2 of Photorhabdus laumondii subsp. laumondii (strain DSM 15139 / CIP 105565 / TT01) (Photorhabdus luminescens subsp. laumondii).